A 294-amino-acid chain; its full sequence is MKITRRPEWLQKKVSPAAHADMERLLGGLQLHTVCQEAHCPNISECFRQRQATFLILGKLCTRLCSFCNVTKQTPLAVDQAEPERVAAAVELLKLTHVVVTSPTRDDLADGGAALYAATVAAIRNASPQTKIELLVPDFAGNQESIAAVVSACPHILGHNLETVPRLYSIRSGADYRRSLLMLEMIRRLNPAMKTKTGLMLGLGETEEELFQALRDLRRVDCSYLSLGQYLAPSRSHYPVQDYPSPETFDRYREQALSMGFEHVESGPYVRSSYHAEHYGTGTGHAKLSPAPAD.

Residues C35, C40, C46, C61, C65, C68, and S273 each coordinate [4Fe-4S] cluster. A Radical SAM core domain is found at 47-262; it reads FRQRQATFLI…REQALSMGFE (216 aa).

Belongs to the radical SAM superfamily. Lipoyl synthase family. [4Fe-4S] cluster is required as a cofactor.

It is found in the cytoplasm. It carries out the reaction [[Fe-S] cluster scaffold protein carrying a second [4Fe-4S](2+) cluster] + N(6)-octanoyl-L-lysyl-[protein] + 2 oxidized [2Fe-2S]-[ferredoxin] + 2 S-adenosyl-L-methionine + 4 H(+) = [[Fe-S] cluster scaffold protein] + N(6)-[(R)-dihydrolipoyl]-L-lysyl-[protein] + 4 Fe(3+) + 2 hydrogen sulfide + 2 5'-deoxyadenosine + 2 L-methionine + 2 reduced [2Fe-2S]-[ferredoxin]. The protein operates within protein modification; protein lipoylation via endogenous pathway; protein N(6)-(lipoyl)lysine from octanoyl-[acyl-carrier-protein]: step 2/2. Its function is as follows. Catalyzes the radical-mediated insertion of two sulfur atoms into the C-6 and C-8 positions of the octanoyl moiety bound to the lipoyl domains of lipoate-dependent enzymes, thereby converting the octanoylated domains into lipoylated derivatives. The polypeptide is Lipoyl synthase (Geotalea daltonii (strain DSM 22248 / JCM 15807 / FRC-32) (Geobacter daltonii)).